A 657-amino-acid polypeptide reads, in one-letter code: Archaeal Lon protease (657 aa).

Residues 1-123 lie on the Cytoplasmic side of the membrane; the sequence is MEENIESVEE…KAEREKRDRS (123 aa). Residue 57-64 participates in ATP binding; sequence GEPGTGKS. A helical transmembrane segment spans residues 124 to 144; the sequence is RSIMFVIFSVVLLGIIAAIVL. Position 145 (Arg-145) is a topological domain, extracellular. A helical transmembrane segment spans residues 146-166; that stretch reads SITLIFFAIMAAAFLYMAMAF. Over 167–657 the chain is Cytoplasmic; the sequence is NPVIRNERAM…ATTRAGNNAA (491 aa). The Lon proteolytic domain maps to 433 to 618; the sequence is GSVVGMVNGL…EDVLRVALVN (186 aa). Residues Ser-525 and Lys-568 contribute to the active site.

It belongs to the peptidase S16 family. Archaeal LonB subfamily. As to quaternary structure, homohexamer. Organized in a ring with a central cavity.

Its subcellular location is the cell membrane. In terms of biological role, ATP-dependent serine protease that mediates the selective degradation of mutant and abnormal proteins as well as certain short-lived regulatory proteins. Degrades polypeptides processively. The chain is Archaeal Lon protease from Thermoplasma acidophilum (strain ATCC 25905 / DSM 1728 / JCM 9062 / NBRC 15155 / AMRC-C165).